The chain runs to 156 residues: Aspartate carbamoyltransferase regulatory chain (156 aa).

Zn(2+) contacts are provided by C110, C115, C140, and C143.

It belongs to the PyrI family. As to quaternary structure, contains catalytic and regulatory chains. Zn(2+) is required as a cofactor.

Functionally, involved in allosteric regulation of aspartate carbamoyltransferase. This Methanocella arvoryzae (strain DSM 22066 / NBRC 105507 / MRE50) protein is Aspartate carbamoyltransferase regulatory chain.